Here is a 191-residue protein sequence, read N- to C-terminus: Threonylcarbamoyl-AMP synthase (191 aa).

The region spanning 10–191 (PFRVRHAAAE…DGRSGAYLRR (182 aa)) is the YrdC-like domain.

This sequence belongs to the SUA5 family. TsaC subfamily.

The protein localises to the cytoplasm. The catalysed reaction is L-threonine + hydrogencarbonate + ATP = L-threonylcarbamoyladenylate + diphosphate + H2O. In terms of biological role, required for the formation of a threonylcarbamoyl group on adenosine at position 37 (t(6)A37) in tRNAs that read codons beginning with adenine. Catalyzes the conversion of L-threonine, HCO(3)(-)/CO(2) and ATP to give threonylcarbamoyl-AMP (TC-AMP) as the acyladenylate intermediate, with the release of diphosphate. This chain is Threonylcarbamoyl-AMP synthase, found in Halorhodospira halophila (strain DSM 244 / SL1) (Ectothiorhodospira halophila (strain DSM 244 / SL1)).